A 751-amino-acid polypeptide reads, in one-letter code: Amyloid-beta precursor protein (751 aa).

Residues 1–17 form the signal peptide; sequence MLPGLALLLLAAWTARA. At 18–682 the chain is on the extracellular side; sequence LEVPTDGNAG…AEDVGSNKGA (665 aa). The tract at residues 28–123 is GFLD subdomain; it reads LLAEPQIAMF…PYRCLVGEFV (96 aa). In terms of domain architecture, E1 spans 28–189; it reads LLAEPQIAMF…RGVEFVCCPL (162 aa). 6 cysteine pairs are disulfide-bonded: C38–C62, C73–C117, C98–C105, C133–C187, C144–C174, and C158–C186. Position 96–110 (96–110) interacts with heparin; sequence NWCKRDRKQCKTHPH. The interval 131–189 is cuBD subdomain; sequence DKCKFLHQERMDVCETHLHWHTVAKETCSEKSTNLHDYGMLLPCGIDKFRGVEFVCCPL. The Cu(2+) site is built by H147, H151, and Y168. Residues 181–188 form a zinc-binding region; that stretch reads GVEFVCCP. Residues E183, C186, and C187 each coordinate Zn(2+). Positions 195–284 are disordered; it reads HVDSADAEED…TTTTTTESVE (90 aa). Residues S198 and S206 each carry the phosphoserine; by CK1 and CK2 modification. A sulfotyrosine mark is found at Y217 and Y262. Residues 228-264 are compositionally biased toward acidic residues; sequence VAEEEEVAEVEEEEADDDEDDEDGDEVEEEAEEPYEE. The segment covering 268–281 has biased composition (low complexity); that stretch reads RTTSIATTTTTTTE. Intrachain disulfides connect C291–C341, C300–C324, and C316–C337. Positions 291–341 constitute a BPTI/Kunitz inhibitor domain; the sequence is CSEQAETGPCRAMISRWYFDVTEGKCAPFFYGGCGGNRNNFDTEEYCMAVC. Heparin-binding stretches follow at residues 316-344 and 363-428; these read CAPF…CGSV and PGDE…QEAA. At Y336 the chain carries Sulfotyrosine. Positions 344–346 match the OX-2 motif; the sequence is VIP. Residues 355-546 form the E2 domain; that stretch reads AVDKYLETPG…EEIQDEVDEL (192 aa). The residue at position 422 (S422) is a Phosphoserine. Y478 carries the phosphotyrosine modification. The collagen-binding stretch occupies residues 504 to 521; that stretch reads AAQIRSQVMTHLRVIYER. N523 and N552 each carry an N-linked (GlcNAc...) asparagine glycan. 4 residues coordinate Cu(2+): H658, Y662, H665, and H666. 4 residues coordinate Zn(2+): H658, Y662, H665, and H666. The interval 676–703 is interaction with PSEN1; sequence VGSNKGAIIGLMVGGVVIATVIVITLVM. The helical transmembrane segment at 683 to 703 threads the bilayer; it reads IIGLMVGGVVIATVIVITLVM. At 704 to 751 the chain is on the cytoplasmic side; sequence LKKKQYTSIHHGVVEVDAAVTPEERHLSKMQQNGYENPTYKFFEQMQN. The Basolateral sorting signal signature appears at 705-715; sequence KKKQYTSIHHG. Position 710 is a phosphothreonine (T710). S711 is modified (phosphoserine; by APP-kinase I). An interaction with G(o)-alpha region spans residues 713–732; it reads HHGVVEVDAAVTPEERHLSK. Residue T724 is modified to Phosphothreonine; by CDK5 and MAPK10. The tract at residues 737–751 is required for the interaction with KIF5B and for anterograde transport in axons; the sequence is GYENPTYKFFEQMQN. At Y738 the chain carries Phosphotyrosine; by ABL1. The YENPXY motif; contains endocytosis signal signature appears at 738–743; the sequence is YENPTY. Residue K744 forms a Glycyl lysine isopeptide (Lys-Gly) (interchain with G-Cter in ubiquitin) linkage.

Belongs to the APP family. Binds, via its C-terminus, to the PID domain of several cytoplasmic proteins, including APBB family members, the APBA family, MAPK8IP1, SHC1 and NUMB and DAB1. Binding to DAB1 inhibits its serine phosphorylation. Interacts (via NPXY motif) with DAB2 (via PID domain); the interaction is impaired by tyrosine phosphorylation of the NPXY motif. Also interacts with GPCR-like protein BPP, APPBP1, IB1, KNS2 (via its TPR domains), APPBP2 (via BaSS) and DDB1. In vitro, it binds MAPT via the MT-binding domains. Associates with microtubules in the presence of ATP and in a kinesin-dependent manner. Interacts, through a C-terminal domain, with GNAO1. Amyloid-beta protein 42 binds CHRNA7 in hippocampal neurons. Amyloid-beta associates with HADH2. Interacts with CPEB1, ANKS1B and AGER. Interacts with ITM2B. Interacts with ITM2C. Interacts with IDE. Can form homodimers; dimerization is enhanced in the presence of Cu(2+) ions. Can form homodimers; this is promoted by heparin binding. Amyloid-beta protein 40 interacts with S100A9. CTF-alpha product of APP interacts with GSAP. Isoform APP695 interacts with SORL1 (via N-terminal ectodomain); this interaction retains APP in the trans-Golgi network and reduces processing into soluble APP-alpha and amyloid-beta peptides. Isoform APP770 interacts with SORL1. The C99 fragment also interacts with SORL1. Interacts with PLD3. Interacts with VDAC1. Interacts with NSG1; could regulate APP processing. Amyloid-beta protein 42 interacts with FPR2. Interacts (via transmembrane region) with PSEN1; the interaction is direct. Interacts with LRRK2. Interacts (via cytoplasmic domain) with KIF5B. Interacts (via C-terminus) with APBB2/FE65L1 (via C-terminus). Interacts (via intracellular domain) with APBB3. Proteolytically processed under normal cellular conditions. Cleavage either by alpha-secretase, beta-secretase or theta-secretase leads to generation and extracellular release of soluble APP peptides, S-APP-alpha and S-APP-beta, and the retention of corresponding membrane-anchored C-terminal fragments, C80, C83 and C99. Subsequent processing of C80 and C83 by gamma-secretase yields P3 peptides. This is the major secretory pathway and is non-amyloidogenic. Alternatively, presenilin/nicastrin-mediated gamma-secretase processing of C99 releases the amyloid-beta proteins, amyloid-beta protein 40 and amyloid-beta protein 42, major components of amyloid plaques, and the cytotoxic C-terminal fragments, gamma-CTF(50), gamma-CTF(57) and gamma-CTF(59). PSEN1 cleavage is more efficient with C83 than with C99 as substrate (in vitro). Amyloid-beta protein 40 and Amyloid-beta protein 42 are cleaved by ACE. Many other minor amyloid-beta peptides, amyloid-beta 1-X peptides, are found in cerebral spinal fluid (CSF) including the amyloid-beta X-15 peptides, produced from the cleavage by alpha-secretase. Post-translationally, proteolytically cleaved by caspases during neuronal apoptosis. Cleavage at Asp-720 by either caspase-3, -8 or -9 results in the production of the neurotoxic C31 peptide and the increased production of amyloid-beta peptides. In terms of processing, N- and O-glycosylated. Phosphorylation in the C-terminal on tyrosine, threonine and serine residues is neuron-specific. Phosphorylation can affect APP processing, neuronal differentiation and interaction with other proteins. Phosphorylated on Thr-724 in neuronal cells by Cdc5 kinase and Mapk10, in dividing cells by Cdc2 kinase in a cell-cycle dependent manner with maximal levels at the G2/M phase and, in vitro, by GSK-3-beta. The Thr-724 phosphorylated form causes a conformational change which reduces binding of Fe65 family members. In dopaminergic (DA) neurons, phosphorylation on Thr-724 by LRKK2 promotes the production and the nuclear translocation of the APP intracellular domain (AICD) which induces DA neuron apoptosis. Phosphorylation on Tyr-738 is required for SHC binding. Phosphorylated in the extracellular domain by casein kinases on both soluble and membrane-bound APP. This phosphorylation is inhibited by heparin. Post-translationally, trophic-factor deprivation triggers the cleavage of surface APP by beta-secretase to release sAPP-beta which is further cleaved to release an N-terminal fragment of APP (N-APP). In terms of processing, amyloid-beta peptides are degraded by IDE. Sulfated on tyrosine residues.

It is found in the cell membrane. It localises to the membrane. Its subcellular location is the perikaryon. The protein localises to the cell projection. The protein resides in the growth cone. It is found in the clathrin-coated pit. It localises to the early endosome. Its subcellular location is the cytoplasmic vesicle. The protein localises to the endoplasmic reticulum. The protein resides in the golgi apparatus. It is found in the secreted. It localises to the cell surface. Its subcellular location is the nucleus. The protein localises to the cytoplasm. Functions as a cell surface receptor and performs physiological functions on the surface of neurons relevant to neurite growth, neuronal adhesion and axonogenesis. Interaction between APP molecules on neighboring cells promotes synaptogenesis. Involved in cell mobility and transcription regulation through protein-protein interactions. Can promote transcription activation through binding to APBB1-KAT5 and inhibit Notch signaling through interaction with Numb. Couples to apoptosis-inducing pathways such as those mediated by G(o) and JIP. Inhibits G(o)-alpha ATPase activity. Acts as a kinesin I membrane receptor, mediating the axonal transport of beta-secretase and presenilin 1. By acting as a kinesin I membrane receptor, plays a role in axonal anterograde transport of cargo towards synapses in axons. May be involved in copper homeostasis/oxidative stress through copper ion reduction. In vitro, copper-metallated APP induces neuronal death directly or is potentiated through Cu(2+)-mediated low-density lipoprotein oxidation. Can regulate neurite outgrowth through binding to components of the extracellular matrix such as heparin and collagen I and IV. Induces a AGER-dependent pathway that involves activation of p38 MAPK, resulting in internalization of amyloid-beta peptide and mitochondrial dysfunction in cultured cortical neurons. Provides Cu(2+) ions for GPC1 which are required for release of nitric oxide (NO) and subsequent degradation of the heparan sulfate chains on GPC1. Its function is as follows. Amyloid-beta peptides are lipophilic metal chelators with metal-reducing activity. Binds transient metals such as copper, zinc and iron. In terms of biological role, the gamma-CTF peptides as well as the caspase-cleaved peptides, including C31, are potent enhancers of neuronal apoptosis. This Saimiri sciureus (Common squirrel monkey) protein is Amyloid-beta precursor protein.